The following is a 332-amino-acid chain: Nucleotide-binding protein RC1_2868 (332 aa).

Positions methionine 1–glycine 27 are disordered. The segment covering threonine 10–threonine 22 has biased composition (low complexity). Residue glycine 36–serine 43 coordinates ATP. Aspartate 82–threonine 85 serves as a coordination point for GTP. Basic and acidic residues-rich tracts occupy residues glycine 302 to alanine 312 and valine 322 to arginine 332. The tract at residues glycine 302–arginine 332 is disordered.

Belongs to the RapZ-like family.

In terms of biological role, displays ATPase and GTPase activities. This chain is Nucleotide-binding protein RC1_2868, found in Rhodospirillum centenum (strain ATCC 51521 / SW).